A 214-amino-acid polypeptide reads, in one-letter code: MVAITHTPKLKHLDKLLAHCHRRRYTAKSTIIYAGDRCETLFFIIKGSVTILIEDDDGREMIIGYLNSGDFFGELGLFEKEGSEQERSAWVRAKVECEVAEISYAKFRELSQQDSEILYTLGSQMADRLRKTTRKVGDLAFLDVTGRVARTLLDLCQQPDAMTHPDGMQIKITRQEIGRIVGCSREMVGRVLKSLEEQGLVHVKGKTMVVFGTR.

3',5'-cyclic AMP-binding positions include 59-60 (RE), 73-75 (GEL), 87-88 (RS), 132-133 (TT), Arg179, and Arg185. Residues 142 to 214 (LDVTGRVART…GKTMVVFGTR (73 aa)) form the HTH crp-type domain. A DNA-binding region (H-T-H motif) is located at residues 174-193 (RQEIGRIVGCSREMVGRVLK).

Homodimer.

Functionally, global cAMP-dependent transcriptional regulator that controls virulence gene expression by distinct cAMP-dependent and -independent mechanisms, which allow to fine tune its virulence program in response to specific host cues or environments. Controls the expression of many regulatory targets including type II, type III and type IV secretion systems, flagellar-mediated motility, and quorum sensing systems. Transcriptional control is exerted by binding to a well-characterized consensus site (5'-ANWWTGNGAWNYAGWTCACAT) within target promoters. Directly binds to the toxA upstream region to regulate exotoxin A production, to the lasR gene promoter to activate the las quorum-sensing system or to the exsA promoter to regulate type III secretion system. Autoregulates as well its own expression. The sequence is that of cAMP-activated global transcriptional regulator Vfr (vfr) from Pseudomonas aeruginosa (strain ATCC 15692 / DSM 22644 / CIP 104116 / JCM 14847 / LMG 12228 / 1C / PRS 101 / PAO1).